The chain runs to 359 residues: Protein Wnt-5b (359 aa).

The first 17 residues, 1-17 (MPSLLLVVVAALLSSWA), serve as a signal peptide directing secretion. Cysteines 83 and 94 form a disulfide. N-linked (GlcNAc...) asparagine glycosylation is found at asparagine 93 and asparagine 99. Disulfide bonds link cysteine 133–cysteine 141, cysteine 143–cysteine 161, cysteine 217–cysteine 231, cysteine 219–cysteine 226, cysteine 288–cysteine 319, cysteine 304–cysteine 314, cysteine 318–cysteine 358, cysteine 334–cysteine 349, cysteine 336–cysteine 346, and cysteine 341–cysteine 342. A lipid anchor (O-palmitoleoyl serine; by PORCN) is attached at serine 223. N-linked (GlcNAc...) asparagine glycans are attached at residues asparagine 291 and asparagine 305.

This sequence belongs to the Wnt family. Interacts with PORCN. In terms of processing, palmitoleoylation is required for efficient binding to frizzled receptors. Depalmitoleoylation leads to Wnt signaling pathway inhibition.

The protein localises to the secreted. It is found in the extracellular space. Its subcellular location is the extracellular matrix. Its function is as follows. Ligand for members of the frizzled family of seven transmembrane receptors. Probable developmental protein. May be a signaling molecule which affects the development of discrete regions of tissues. Is likely to signal over only few cell diameters. The sequence is that of Protein Wnt-5b (Wnt5b) from Mus musculus (Mouse).